A 243-amino-acid polypeptide reads, in one-letter code: tRNA pseudouridine synthase A (243 aa).

Catalysis depends on D53, which acts as the Nucleophile. Y111 contributes to the substrate binding site.

The protein belongs to the tRNA pseudouridine synthase TruA family. In terms of assembly, homodimer.

The enzyme catalyses uridine(38/39/40) in tRNA = pseudouridine(38/39/40) in tRNA. Formation of pseudouridine at positions 38, 39 and 40 in the anticodon stem and loop of transfer RNAs. The polypeptide is tRNA pseudouridine synthase A (Chlorobium phaeovibrioides (strain DSM 265 / 1930) (Prosthecochloris vibrioformis (strain DSM 265))).